The sequence spans 163 residues: MSDAEDIPTGRKRRPREQTPVQRALGLLVRREHSRKELTRKLTARGIEDEAAQAAVAKLTEAGWQDDTRFAENLVRMRANTGYGPIHVRAELGTHGLDSAAIAAAMDSYEGDWQENARDLVRRRFGEAGPQDLTQRRKAADLLARRGFDGDSIRRATRYDPDD.

The segment at 1-21 (MSDAEDIPTGRKRRPREQTPV) is disordered.

The protein belongs to the RecX family.

Its subcellular location is the cytoplasm. Functionally, modulates RecA activity. This Stenotrophomonas maltophilia (strain K279a) protein is Regulatory protein RecX.